Here is a 360-residue protein sequence, read N- to C-terminus: Beta-1,3-N-acetylglucosaminyltransferase manic fringe (360 aa).

At 1 to 5 the chain is on the cytoplasmic side; it reads MILRR. Residues 6–26 form a helical; Signal-anchor for type II membrane protein membrane-spanning segment; sequence LFHVLPAFAFTLFILVLLDLQ. At 27 to 360 the chain is on the lumenal side; that stretch reads LRTRSDQKPQ…ALSWNQHVMH (334 aa). The segment at 51-74 is disordered; the sequence is TTAENQHRDGAHEKEKAEGQKWTE. A compositionally biased stretch (basic and acidic residues) spans 55–74; sequence NQHRDGAHEKEKAEGQKWTE. Residue Arg-100 coordinates substrate. 2 disulfide bridges follow: Cys-139-Cys-150 and Cys-168-Cys-231. Asp-172 serves as a coordination point for substrate. Asp-173 lines the Mn(2+) pocket. The N-linked (GlcNAc...) asparagine glycan is linked to Asn-214. The active site involves Asp-261. His-285 contributes to the Mn(2+) binding site. Cys-335 and Cys-344 are oxidised to a cystine.

The protein belongs to the glycosyltransferase 31 family. Requires Mn(2+) as cofactor.

The protein localises to the golgi apparatus membrane. The enzyme catalyses 3-O-(alpha-L-fucosyl)-L-threonyl-[EGF-like domain protein] + UDP-N-acetyl-alpha-D-glucosamine = 3-O-(N-acetyl-beta-D-glucosaminyl-(1-&gt;3)-alpha-L-fucosyl)-L-threonyl-[EGF-like domain protein] + UDP + H(+). It carries out the reaction 3-O-(alpha-L-fucosyl)-L-seryl-[EGF-like domain protein] + UDP-N-acetyl-alpha-D-glucosamine = 3-O-(N-acetyl-beta-D-glucosaminyl-(1-&gt;3)-alpha-L-fucosyl)-L-seryl-[EGF-like domain protein] + UDP + H(+). Glycosyltransferase that initiates the elongation of O-linked fucose residues attached to EGF-like repeats in the extracellular domain of Notch molecules. In Danio rerio (Zebrafish), this protein is Beta-1,3-N-acetylglucosaminyltransferase manic fringe.